The chain runs to 455 residues: Chromosomal replication initiator protein DnaA (455 aa).

Residues 1 to 73 form a domain I, interacts with DnaA modulators region; the sequence is METSLETLWS…RDVVHEILGH (73 aa). The segment at 73-116 is domain II; it reads HPVEIQIEIAQGDSNATISAPEVASPPPTASPVENTNTSQRQQA. The tract at residues 92 to 116 is disordered; sequence APEVASPPPTASPVENTNTSQRQQA. A compositionally biased stretch (polar residues) spans 104–116; sequence PVENTNTSQRQQA. Positions 117 to 333 are domain III, AAA+ region; the sequence is SLNPKYVFSR…GALIRAVAYI (217 aa). Positions 161, 163, 164, and 165 each coordinate ATP. Residues 334–455 form a domain IV, binds dsDNA region; sequence SISGLPMNVE…GDRIKLANQP (122 aa).

It belongs to the DnaA family. Oligomerizes as a right-handed, spiral filament on DNA at oriC.

The protein localises to the cytoplasm. Functionally, plays an essential role in the initiation and regulation of chromosomal replication. ATP-DnaA binds to the origin of replication (oriC) to initiate formation of the DNA replication initiation complex once per cell cycle. Binds the DnaA box (a 9 base pair repeat at the origin) and separates the double-stranded (ds)DNA. Forms a right-handed helical filament on oriC DNA; dsDNA binds to the exterior of the filament while single-stranded (ss)DNA is stabiized in the filament's interior. The ATP-DnaA-oriC complex binds and stabilizes one strand of the AT-rich DNA unwinding element (DUE), permitting loading of DNA polymerase. After initiation quickly degrades to an ADP-DnaA complex that is not apt for DNA replication. Binds acidic phospholipids. The polypeptide is Chromosomal replication initiator protein DnaA (Acaryochloris marina (strain MBIC 11017)).